The chain runs to 490 residues: Protein nucleotidyltransferase YdiU (490 aa).

Positions 94, 96, 97, 117, 129, 130, 180, and 187 each coordinate ATP. The Proton acceptor role is filled by aspartate 256. Mg(2+) contacts are provided by asparagine 257 and aspartate 266. ATP is bound at residue aspartate 266.

This sequence belongs to the SELO family. Mg(2+) is required as a cofactor. Mn(2+) serves as cofactor.

It carries out the reaction L-seryl-[protein] + ATP = 3-O-(5'-adenylyl)-L-seryl-[protein] + diphosphate. It catalyses the reaction L-threonyl-[protein] + ATP = 3-O-(5'-adenylyl)-L-threonyl-[protein] + diphosphate. The enzyme catalyses L-tyrosyl-[protein] + ATP = O-(5'-adenylyl)-L-tyrosyl-[protein] + diphosphate. The catalysed reaction is L-histidyl-[protein] + UTP = N(tele)-(5'-uridylyl)-L-histidyl-[protein] + diphosphate. It carries out the reaction L-seryl-[protein] + UTP = O-(5'-uridylyl)-L-seryl-[protein] + diphosphate. It catalyses the reaction L-tyrosyl-[protein] + UTP = O-(5'-uridylyl)-L-tyrosyl-[protein] + diphosphate. Nucleotidyltransferase involved in the post-translational modification of proteins. It can catalyze the addition of adenosine monophosphate (AMP) or uridine monophosphate (UMP) to a protein, resulting in modifications known as AMPylation and UMPylation. This chain is Protein nucleotidyltransferase YdiU, found in Clostridium perfringens (strain SM101 / Type A).